We begin with the raw amino-acid sequence, 501 residues long: Amidophosphoribosyltransferase (501 aa).

The active-site Nucleophile is the Cys-2. The Glutamine amidotransferase type-2 domain maps to 2–234 (CGIVGIVGKS…PGEAVYITEE (233 aa)). Thr-303, Asp-365, and Asp-366 together coordinate Mg(2+).

It in the C-terminal section; belongs to the purine/pyrimidine phosphoribosyltransferase family. The cofactor is Mg(2+).

It carries out the reaction 5-phospho-beta-D-ribosylamine + L-glutamate + diphosphate = 5-phospho-alpha-D-ribose 1-diphosphate + L-glutamine + H2O. It participates in purine metabolism; IMP biosynthesis via de novo pathway; N(1)-(5-phospho-D-ribosyl)glycinamide from 5-phospho-alpha-D-ribose 1-diphosphate: step 1/2. Functionally, catalyzes the formation of phosphoribosylamine from phosphoribosylpyrophosphate (PRPP) and glutamine. The protein is Amidophosphoribosyltransferase of Pseudomonas aeruginosa (strain ATCC 15692 / DSM 22644 / CIP 104116 / JCM 14847 / LMG 12228 / 1C / PRS 101 / PAO1).